Reading from the N-terminus, the 459-residue chain is Zinc finger chaperone zpr1 (459 aa).

2 C4-type zinc fingers span residues 38–70 (CMEC…CPHC) and 259–291 (CPSC…CDRC).

It belongs to the ZPR1 family.

It localises to the cytoplasm. The protein localises to the nucleus. Its function is as follows. Acts as a protein folding chaperone for elongation factor 1-alpha. The chain is Zinc finger chaperone zpr1 from Schizosaccharomyces pombe (strain 972 / ATCC 24843) (Fission yeast).